The chain runs to 435 residues: Virulence factor PIT1 (435 aa).

A run of 5 helical transmembrane segments spans residues 33–53 (ETTT…SEVI), 77–97 (IFFI…ILVT), 111–131 (WAWT…CVIG), 143–163 (VASW…MWTN), and 204–224 (TFWF…ACCI). An N-linked (GlcNAc...) asparagine glycan is attached at N330. Residues 392-404 (SPQMPSKAQSQSI) show a composition bias toward polar residues. Positions 392–435 (SPQMPSKAQSQSIPYKREVEVTVDMSPVPPPPGPSPAPLPAPYM) are disordered. Pro residues predominate over residues 418-435 (PVPPPPGPSPAPLPAPYM).

O-mannosylated by PMT4. Is also N-glycosylated.

It is found in the cell membrane. In terms of biological role, plasma membrane virulence factor required for spreading and inducing tumors in infected leaves. This is Virulence factor PIT1 from Mycosarcoma maydis (Corn smut fungus).